Here is a 295-residue protein sequence, read N- to C-terminus: Putative aquaporin-12A (295 aa).

The chain crosses the membrane as a helical span at residues 1 to 21; sequence MAGLNVSLSFFFATFALCEAA. At 22-54 the chain is on the extracellular side; sequence RRASKALLPVGAYEVFAREAMRTLVELGPWAGD. Residues 55–75 traverse the membrane as a helical segment; sequence FGPDLLLTLLFLLFLAHGVTL. Topologically, residues 76–99 are cytoplasmic; the sequence is DGASANPTVSLQEFLMAEQSLPGT. Residues 77 to 114 constitute an intramembrane region (discontinuously helical); it reads GASANPTVSLQEFLMAEQSLPGTLLKLAAQGLGMQAAC. An NPA 1 motif is present at residues 81-83; it reads NPT. Residues 100 to 126 form a helical membrane-spanning segment; it reads LLKLAAQGLGMQAACTLMRLCWAWELS. Topologically, residues 127–145 are extracellular; the sequence is DLHLLQSLMAQSCSSALRT. A helical transmembrane segment spans residues 146–166; that stretch reads SVPHGALVEAACAFCFHLTLL. Residues 167 to 178 lie on the Cytoplasmic side of the membrane; that stretch reads HLRHSPPAYSGP. A helical transmembrane segment spans residues 179–199; that stretch reads AVALLVTVTAYTAGPFTSAFF. The segment at residues 195-206 is an intramembrane region (discontinuously helical); sequence TSAFFNPALAAS. An NPA 2 motif is present at residues 200-202; the sequence is NPA. The Extracellular portion of the chain corresponds to 200–215; the sequence is NPALAASVTFACSGHT. The helical transmembrane segment at 216-236 threads the bilayer; the sequence is LLEYVQVYWLGPLTGMVLAVL. Topologically, residues 237–295 are cytoplasmic; sequence LHQGRLPHLFQRNLFYGQKNKYRAPRGKPAPASGDTQTPAKGSSVREPGRSGVEGPHSS. Residues 257-295 are disordered; the sequence is KYRAPRGKPAPASGDTQTPAKGSSVREPGRSGVEGPHSS.

Belongs to the MIP/aquaporin (TC 1.A.8) family. AQP11/AQP12 subfamily. Homotetramer; each monomer provides an independent water pore. In terms of tissue distribution, restricted to the pancreas.

It localises to the membrane. It carries out the reaction H2O(in) = H2O(out). Functionally, putative aquaporin. Could form homotetrameric transmembrane channels, with each monomer independently mediating water transport across the plasma membrane along its osmotic gradient. This chain is Putative aquaporin-12A, found in Homo sapiens (Human).